A 104-amino-acid polypeptide reads, in one-letter code: Glutaredoxin (104 aa).

The Glutaredoxin domain maps to 3–103 (MIKAQELVSS…PLLTEAGAVK (101 aa)). The cysteines at positions 23 and 26 are disulfide-linked.

It belongs to the glutaredoxin family. CPYC subfamily.

It localises to the cytoplasm. Its function is as follows. Has a glutathione-disulfide oxidoreductase activity in the presence of NADPH and glutathione reductase. Reduces low molecular weight disulfides and proteins. The polypeptide is Glutaredoxin (Vernicia fordii (Tung)).